The sequence spans 1074 residues: DNA primase (1074 aa).

Residues 1012–1052 form a CHC2-type zinc finger; sequence CVRFKHARARRASARSYLALNVDAHGRLCVCVIQQCFAAKC.

Belongs to the herpesviridae DNA primase family. In terms of assembly, associates with the helicase and the primase-associated factor to form the helicase-primase factor.

The protein localises to the host nucleus. In terms of biological role, essential component of the helicase/primase complex. Unwinds the DNA at the replication forks and generates single-stranded DNA for both leading and lagging strand synthesis. The primase initiates primer synthesis and thereby produces large amount of short RNA primers on the lagging strand that the polymerase elongates using dNTPs. This Gallus gallus (Chicken) protein is DNA primase (MDV066).